The following is a 151-amino-acid chain: Ribosome maturation factor RimP (151 aa).

Belongs to the RimP family.

Its subcellular location is the cytoplasm. Its function is as follows. Required for maturation of 30S ribosomal subunits. The polypeptide is Ribosome maturation factor RimP (Shewanella frigidimarina (strain NCIMB 400)).